Consider the following 92-residue polypeptide: Small ribosomal subunit protein bS18 (92 aa).

This sequence belongs to the bacterial ribosomal protein bS18 family. In terms of assembly, part of the 30S ribosomal subunit. Forms a tight heterodimer with protein bS6.

Functionally, binds as a heterodimer with protein bS6 to the central domain of the 16S rRNA, where it helps stabilize the platform of the 30S subunit. The chain is Small ribosomal subunit protein bS18 from Caulobacter sp. (strain K31).